The primary structure comprises 589 residues: Sulfite reductase [NADPH] hemoprotein beta-component (589 aa).

The [4Fe-4S] cluster site is built by Cys-443, Cys-449, Cys-488, and Cys-492. Cys-492 provides a ligand contact to siroheme.

The protein belongs to the nitrite and sulfite reductase 4Fe-4S domain family. Alpha(8)-beta(8). The alpha component is a flavoprotein, the beta component is a hemoprotein. Siroheme is required as a cofactor. It depends on [4Fe-4S] cluster as a cofactor.

It catalyses the reaction hydrogen sulfide + 3 NADP(+) + 3 H2O = sulfite + 3 NADPH + 4 H(+). The protein operates within sulfur metabolism; hydrogen sulfide biosynthesis; hydrogen sulfide from sulfite (NADPH route): step 1/1. In terms of biological role, component of the sulfite reductase complex that catalyzes the 6-electron reduction of sulfite to sulfide. This is one of several activities required for the biosynthesis of L-cysteine from sulfate. This is Sulfite reductase [NADPH] hemoprotein beta-component from Neisseria meningitidis serogroup C / serotype 2a (strain ATCC 700532 / DSM 15464 / FAM18).